A 760-amino-acid polypeptide reads, in one-letter code: Xaa-Pro dipeptidyl-peptidase (760 aa).

Active-site charge relay system residues include serine 349, aspartate 469, and histidine 499.

The protein belongs to the peptidase S15 family. Homodimer.

Its subcellular location is the cytoplasm. It carries out the reaction Hydrolyzes Xaa-Pro-|- bonds to release unblocked, N-terminal dipeptides from substrates including Ala-Pro-|-p-nitroanilide and (sequentially) Tyr-Pro-|-Phe-Pro-|-Gly-Pro-|-Ile.. Functionally, removes N-terminal dipeptides sequentially from polypeptides having unsubstituted N-termini provided that the penultimate residue is proline. This chain is Xaa-Pro dipeptidyl-peptidase, found in Streptococcus pyogenes serotype M28 (strain MGAS6180).